Consider the following 512-residue polypeptide: Tyrosine-protein kinase Lyn (512 aa).

Positions methionine 1–glutamate 62 are disordered. A lipid anchor (N-myristoyl glycine) is attached at glycine 2. A lipid anchor (S-palmitoyl cysteine) is attached at cysteine 3. Serine 11 and serine 13 each carry phosphoserine. The SH3 domain maps to glutamate 63–threonine 123. An SH2 domain is found at tryptophan 129–cysteine 226. Tyrosine 193 carries the phosphotyrosine modification. A Phosphoserine modification is found at serine 228. The Protein kinase domain occupies isoleucine 247–tyrosine 501. Residues leucine 253 to valine 261 and lysine 275 contribute to the ATP site. Phosphotyrosine occurs at positions 306 and 316. Aspartate 367 functions as the Proton acceptor in the catalytic mechanism. Tyrosine 397 is subject to Phosphotyrosine; by autocatalysis. Phosphotyrosine occurs at positions 460 and 473. Tyrosine 508 bears the Phosphotyrosine; by autocatalysis, CSK and MATK mark.

The protein belongs to the protein kinase superfamily. Tyr protein kinase family. SRC subfamily. As to quaternary structure, interacts with TEC. Interacts (via SH2 domain) with FLT3 (tyrosine phosphorylated). Interacts with LIME1 and with CD79A upon activation of the B-cell antigen receptor. Interacts with the B-cell receptor complex. Interacts with phosphorylated THEMIS2. Interacts with EPOR. Interacts with MS4A2/FCER1B. Interaction (via the SH2 and SH3 domains) with MUC1 is stimulated by IL7 and the subsequent phosphorylation increases the binding between MUC1 and CTNNB1/beta-catenin. Interacts with ADAM15. Interacts with NDFIP2 and more weakly with NDFIP1. Interacts with FASLG. Interacts with KIT. Interacts with HCLS1. Interacts with FCGR2B. Interacts with FCGR1A; the interaction may be indirect. Interacts with CD19, CD22, CD79A and CD79B. Interacts (via SH3 domain) with CBLC, PPP1R15A and PDE4A. Interacts with TGFB1I1. Interacts (via SH3 domain) with PIK3R1, the regulatory subunit of phosphatidylinositol 3-kinase; this interaction enhances phosphatidylinositol 3-kinase activity. Interacts with CSF2RB, the common subunit of the IL3, IL5 and CSF2 receptors. Interacts with PAG1; identified in a complex with PAG1 and STAT3. Interacts with ABL1. Interacts with PTPN6/SHP-1. Interacts (via SH3 domain) with SCIMP (via proline-rich region). This interaction facilitates the phosphorylation of SCIMP on 'Tyr-107', which enhances binding of SCIMP to TLR4, and consequently the phosphorylation of TLR4 in response to stimulation by lipopolysaccharide in macrophages. Interacts with LPXN (via LD motif 3) and the interaction is induced upon B-cell antigen receptor (BCR) activation. Interacts (via SH3-domain) with ANKRD54 (via ankyrin repeat region) in an activation-independent status of LYN. Forms a multiprotein complex with ANKRD54 and HCLS1. Interacts (via SH2 and SH3 domains) with UNC119; leading to LYN activation. Interacts with CD36. Interacts with LYN. Interacts with SKAP1 and FYB1; this interaction promotes the phosphorylation of CLNK. Interacts with BCAR1/CAS and NEDD9/HEF1. In terms of assembly, (Microbial infection) Interacts with Epstein-Barr virus LMP2A. (Microbial infection) Interacts with Herpes virus saimiri tyrosine kinase interacting protein (Tip). Ubiquitinated by CBL, leading to its degradation. Ubiquitination is SH3-dependent. Post-translationally, autophosphorylated. Phosphorylated on tyrosine residues in response to KIT signaling. Phosphorylation at Tyr-397 is required for optimal activity. Phosphorylation at Tyr-508 inhibits kinase activity. Phosphorylated at Tyr-508 by CSK. Dephosphorylated by PTPRC/CD45. Becomes rapidly phosphorylated upon activation of the B-cell receptor and the immunoglobulin receptor FCGR1A. Phosphorylated in response to ITGB1 in B-cells. Detected in monocytes (at protein level). Detected in placenta, and in fetal brain, lung, liver and kidney. Widely expressed in a variety of organs, tissues, and cell types such as epidermoid, hematopoietic, and neuronal cells. Expressed in primary neuroblastoma tumors.

Its subcellular location is the cell membrane. The protein resides in the nucleus. It localises to the cytoplasm. The protein localises to the perinuclear region. It is found in the golgi apparatus. Its subcellular location is the membrane. It carries out the reaction L-tyrosyl-[protein] + ATP = O-phospho-L-tyrosyl-[protein] + ADP + H(+). Its activity is regulated as follows. Subject to autoinhibition, mediated by intramolecular interactions between the SH2 domain and the C-terminal phosphotyrosine. Phosphorylation at Tyr-397 is required for optimal activity. Phosphorylated by CSK at Tyr-508; phosphorylation at Tyr-508 inhibits kinase activity. Kinase activity is modulated by dephosphorylation by PTPRC/CD45. Inhibited by Dasatinib, PP2, and SU6656. Non-receptor tyrosine-protein kinase that transmits signals from cell surface receptors and plays an important role in the regulation of innate and adaptive immune responses, hematopoiesis, responses to growth factors and cytokines, integrin signaling, but also responses to DNA damage and genotoxic agents. Functions primarily as negative regulator, but can also function as activator, depending on the context. Required for the initiation of the B-cell response, but also for its down-regulation and termination. Plays an important role in the regulation of B-cell differentiation, proliferation, survival and apoptosis, and is important for immune self-tolerance. Acts downstream of several immune receptors, including the B-cell receptor, CD79A, CD79B, CD5, CD19, CD22, FCER1, FCGR2, FCGR1A, TLR2 and TLR4. Plays a role in the inflammatory response to bacterial lipopolysaccharide. Mediates the responses to cytokines and growth factors in hematopoietic progenitors, platelets, erythrocytes, and in mature myeloid cells, such as dendritic cells, neutrophils and eosinophils. Acts downstream of EPOR, KIT, MPL, the chemokine receptor CXCR4, as well as the receptors for IL3, IL5 and CSF2. Plays an important role in integrin signaling. Regulates cell proliferation, survival, differentiation, migration, adhesion, degranulation, and cytokine release. Involved in the regulation of endothelial activation, neutrophil adhesion and transendothelial migration. Down-regulates signaling pathways by phosphorylation of immunoreceptor tyrosine-based inhibitory motifs (ITIM), that then serve as binding sites for phosphatases, such as PTPN6/SHP-1, PTPN11/SHP-2 and INPP5D/SHIP-1, that modulate signaling by dephosphorylation of kinases and their substrates. Phosphorylates LIME1 in response to CD22 activation. Phosphorylates BTK, CBL, CD5, CD19, CD72, CD79A, CD79B, CSF2RB, DOK1, HCLS1, LILRB3/PIR-B, MS4A2/FCER1B, SYK and TEC. Promotes phosphorylation of SIRPA, PTPN6/SHP-1, PTPN11/SHP-2 and INPP5D/SHIP-1. Mediates phosphorylation of the BCR-ABL fusion protein. Required for rapid phosphorylation of FER in response to FCER1 activation. Mediates KIT phosphorylation. Acts as an effector of EPOR (erythropoietin receptor) in controlling KIT expression and may play a role in erythroid differentiation during the switch between proliferation and maturation. Depending on the context, activates or inhibits several signaling cascades. Regulates phosphatidylinositol 3-kinase activity and AKT1 activation. Regulates activation of the MAP kinase signaling cascade, including activation of MAP2K1/MEK1, MAPK1/ERK2, MAPK3/ERK1, MAPK8/JNK1 and MAPK9/JNK2. Mediates activation of STAT5A and/or STAT5B. Phosphorylates LPXN on 'Tyr-72'. Kinase activity facilitates TLR4-TLR6 heterodimerization and signal initiation. Phosphorylates SCIMP on 'Tyr-107'; this enhances binding of SCIMP to TLR4, promoting the phosphorylation of TLR4, and a selective cytokine response to lipopolysaccharide in macrophages. Phosphorylates CLNK. Phosphorylates BCAR1/CAS and NEDD9/HEF1. The chain is Tyrosine-protein kinase Lyn (LYN) from Homo sapiens (Human).